A 329-amino-acid chain; its full sequence is MSNDGDLNIDNLITRLLEVRGCRPGKPVTMSEAEIRALCHKSREIFLSQPILLELEAPLKICGDIHGQYNDLLRLFEYGGFPPEANYLFLGDYVDRGKQSLETICLLLAYKVKYPENFFLLRGNHECASINRIYGFYDECKRRFSIKLWKTFTDCFNCLPIAALIDEKIFCCHGGLSPDLQNMEQIRRVMRPTDVPDTGLLCDLLWSDPDKDVTGWGENDRGVSFTFGPDVVAKFLNRHDLDLICRAHQVVEDGYEFFAKRQLVTLFSAPNYCGEFDNAGGMMSVDETLMCSFQILKPSEKKAKYQYQGMNSGRPAVGGGRPGTTAGKK.

4 residues coordinate Mn(2+): Asp-64, His-66, Asp-92, and Asn-124. His-125 functions as the Proton donor in the catalytic mechanism. Mn(2+) contacts are provided by His-173 and His-248. The interval 309–329 is disordered; the sequence is GMNSGRPAVGGGRPGTTAGKK.

This sequence belongs to the PPP phosphatase family. PP-1 subfamily. Interacts with lab-1; the interaction is direct. Interacts with knl-1; the interaction is direct. The cofactor is Mn(2+).

The enzyme catalyses O-phospho-L-seryl-[protein] + H2O = L-seryl-[protein] + phosphate. It catalyses the reaction O-phospho-L-threonyl-[protein] + H2O = L-threonyl-[protein] + phosphate. Functionally, serine/threonine-protein phosphatase which antagonizes the function of air-2 in the regulation of chromosome cohesion. Dephosphorylates histone H3 at 'Ser-10'. Dephosphorylates translation initiation factor eIF2alpha. Involved in the activation of chloride channel clh-3 during cell swelling and meiotic maturation. This chain is Serine/threonine-protein phosphatase PP1-alpha (gsp-1), found in Caenorhabditis briggsae.